The sequence spans 327 residues: DNA-directed RNA polymerase subunit alpha (327 aa).

Positions 1–231 are alpha N-terminal domain (alpha-NTD); that stretch reads MIYQMQMPAK…DHVTFFANFS (231 aa). The segment at 252–327 is alpha C-terminal domain (alpha-CTD); the sequence is MRRLFHTKIE…GMDITKYQMK (76 aa).

The protein belongs to the RNA polymerase alpha chain family. As to quaternary structure, homodimer. The RNAP catalytic core consists of 2 alpha, 1 beta, 1 beta' and 1 omega subunit. When a sigma factor is associated with the core the holoenzyme is formed, which can initiate transcription.

The enzyme catalyses RNA(n) + a ribonucleoside 5'-triphosphate = RNA(n+1) + diphosphate. In terms of biological role, DNA-dependent RNA polymerase catalyzes the transcription of DNA into RNA using the four ribonucleoside triphosphates as substrates. The chain is DNA-directed RNA polymerase subunit alpha from Pelodictyon phaeoclathratiforme (strain DSM 5477 / BU-1).